A 184-amino-acid chain; its full sequence is Photosystem I assembly protein Ycf4 (184 aa).

The next 2 membrane-spanning stretches (helical) occupy residues 19–39 (LSNF…LLVG) and 57–77 (FIFF…LFIS).

Belongs to the Ycf4 family.

It is found in the plastid. The protein localises to the chloroplast thylakoid membrane. In terms of biological role, seems to be required for the assembly of the photosystem I complex. The protein is Photosystem I assembly protein Ycf4 of Jasminum nudiflorum (Winter jasmine).